The chain runs to 114 residues: UPF0342 protein LCABL_19440 (114 aa).

The protein belongs to the UPF0342 family.

The chain is UPF0342 protein LCABL_19440 from Lacticaseibacillus casei (strain BL23) (Lactobacillus casei).